The following is a 255-amino-acid chain: Tritrans,polycis-undecaprenyl-diphosphate synthase (geranylgeranyl-diphosphate specific) (255 aa).

The active site involves Asp34. Asp34 provides a ligand contact to Mg(2+). Substrate is bound by residues 35-38 (GNRR), His51, and 79-81 (STE). The active-site Proton acceptor is the Asn82. Substrate is bound by residues Phe83, Arg85, Arg204, and 210-212 (RIS). Glu223 serves as a coordination point for Mg(2+).

This sequence belongs to the UPP synthase family. As to quaternary structure, homodimer. Requires Mg(2+) as cofactor.

The enzyme catalyses geranylgeranyl diphosphate + 7 isopentenyl diphosphate = tri-trans,hepta-cis-undecaprenyl diphosphate + 7 diphosphate. In terms of biological role, catalyzes the sequential condensation of isopentenyl diphosphate (IPP) with geranylgeranyl diphosphate (GGPP) to yield (2Z,6Z,10Z,14Z,18Z,22Z,26Z,30E,34E,38E)-undecaprenyl diphosphate (tritrans,heptacis-UPP). It is probably the precursor of glycosyl carrier lipids. The sequence is that of Tritrans,polycis-undecaprenyl-diphosphate synthase (geranylgeranyl-diphosphate specific) from Picrophilus torridus (strain ATCC 700027 / DSM 9790 / JCM 10055 / NBRC 100828 / KAW 2/3).